The following is a 344-amino-acid chain: Trace amine-associated receptor 8a (344 aa).

Over Met-1 to Leu-33 the chain is Extracellular. N-linked (GlcNAc...) asparagine glycans are attached at residues Asn-4 and Asn-18. Intrachain disulfides connect Cys-21/Cys-185 and Cys-96/Cys-189. Residues Leu-34–Ile-54 form a helical membrane-spanning segment. The Cytoplasmic segment spans residues Ser-55 to Asn-67. A helical transmembrane segment spans residues Phe-68–Ser-88. Over Met-89–Thr-102 the chain is Extracellular. The helical transmembrane segment at Phe-103–Val-127 threads the bilayer. Over Asp-128–Ser-146 the chain is Cytoplasmic. The chain crosses the membrane as a helical span at residues Val-147–Phe-167. The Extracellular portion of the chain corresponds to Tyr-168–Asp-196. Residues Trp-197–Ser-217 form a helical membrane-spanning segment. The Cytoplasmic portion of the chain corresponds to Lys-218–Thr-260. A helical transmembrane segment spans residues Leu-261 to Ile-281. Residues Asp-282 to Ala-291 lie on the Extracellular side of the membrane. A helical transmembrane segment spans residues Tyr-292–Phe-314. The Cytoplasmic segment spans residues Phe-315–Glu-344.

The protein belongs to the G-protein coupled receptor 1 family.

It is found in the cell membrane. Olfactory receptor activated by trace amines. Trace amine compounds are enriched in animal body fluids and act on trace amine-associated receptors (TAARs) to elicit both intraspecific and interspecific innate behaviors. Ligand-binding causes a conformation change that triggers signaling via G(s)-class of G alpha proteins (GNAL or GNAS). This chain is Trace amine-associated receptor 8a, found in Rattus norvegicus (Rat).